Consider the following 349-residue polypeptide: Isopentenyl-diphosphate delta-isomerase (349 aa).

Substrate is bound at residue 6–7 (RK). FMN-binding positions include 62-64 (AMT), Ser93, and Asn122. Gln152 is a substrate binding site. Residue Glu153 coordinates Mg(2+). FMN is bound by residues Lys184, Thr214, 258–259 (GG), and 280–281 (AG).

The protein belongs to the IPP isomerase type 2 family. As to quaternary structure, homooctamer. Dimer of tetramers. The cofactor is FMN. Requires NADPH as cofactor. Mg(2+) serves as cofactor.

The protein resides in the cytoplasm. The enzyme catalyses isopentenyl diphosphate = dimethylallyl diphosphate. Involved in the biosynthesis of isoprenoids. Catalyzes the 1,3-allylic rearrangement of the homoallylic substrate isopentenyl (IPP) to its allylic isomer, dimethylallyl diphosphate (DMAPP). The chain is Isopentenyl-diphosphate delta-isomerase from Bacillus mycoides (strain KBAB4) (Bacillus weihenstephanensis).